We begin with the raw amino-acid sequence, 233 residues long: Sugar fermentation stimulation protein homolog (233 aa).

It belongs to the SfsA family.

This Saccharophagus degradans (strain 2-40 / ATCC 43961 / DSM 17024) protein is Sugar fermentation stimulation protein homolog.